The sequence spans 215 residues: Peroxiredoxin (215 aa).

The 156-residue stretch at 3 to 158 (PLLGDNFPEI…ILRAVKALQV (156 aa)) folds into the Thioredoxin domain. Cys-45 (cysteine sulfenic acid (-SOH) intermediate) is an active-site residue. A substrate-binding site is contributed by Arg-121. Cys-205 and Cys-211 are oxidised to a cystine.

The protein belongs to the peroxiredoxin family. Prx6 subfamily. Homodecamer. Pentamer of dimers that assemble into a ring structure.

The protein localises to the cytoplasm. It catalyses the reaction a hydroperoxide + [thioredoxin]-dithiol = an alcohol + [thioredoxin]-disulfide + H2O. Functionally, thiol-specific peroxidase that catalyzes the reduction of hydrogen peroxide and organic hydroperoxides to water and alcohols, respectively. Plays a role in cell protection against oxidative stress by detoxifying peroxides. This chain is Peroxiredoxin, found in Archaeoglobus fulgidus (strain ATCC 49558 / DSM 4304 / JCM 9628 / NBRC 100126 / VC-16).